The chain runs to 427 residues: tRNA(Ile)-lysidine synthase (427 aa).

21–26 (SGGADS) is an ATP binding site.

It belongs to the tRNA(Ile)-lysidine synthase family.

Its subcellular location is the cytoplasm. The catalysed reaction is cytidine(34) in tRNA(Ile2) + L-lysine + ATP = lysidine(34) in tRNA(Ile2) + AMP + diphosphate + H(+). In terms of biological role, ligates lysine onto the cytidine present at position 34 of the AUA codon-specific tRNA(Ile) that contains the anticodon CAU, in an ATP-dependent manner. Cytidine is converted to lysidine, thus changing the amino acid specificity of the tRNA from methionine to isoleucine. The chain is tRNA(Ile)-lysidine synthase from Actinobacillus succinogenes (strain ATCC 55618 / DSM 22257 / CCUG 43843 / 130Z).